We begin with the raw amino-acid sequence, 196 residues long: Transcription repressor OFP10 (196 aa).

The 60-residue stretch at 100–159 folds into the OVATE domain; that stretch reads MAKESINPFEDYKKSMNQMIEERYIETESELKELLRCFLDINPSPQHNLIVRAFVDVCSH.

As to expression, expressed in roots, cauline leaves, shoots, stems, flower buds and siliques.

It is found in the nucleus. Transcriptional repressor that may regulate multiple aspects of plant growth and development through the regulation of BEL1-LIKE (BLH) and KNOX TALE (KNAT) homeodomain transcription factors. The sequence is that of Transcription repressor OFP10 (OFP10) from Arabidopsis thaliana (Mouse-ear cress).